A 182-amino-acid chain; its full sequence is MSRIGRQPITVPAGVEVEIDGSTVKVKGPKGQLVKEMHRDMIIKYEDGRLIVERPANDKLHKSLHGLTRTLLNNMVVGVTAGFQKNLELVGVGYRASKQGNKLVLAVGYSHPVEIEPEAGLEIEVPAPTKISIKGVDKEKVGALAAAIRAVRQPEPYKGKGIKYEGEKIRRKVGKAGGKGKK.

This sequence belongs to the universal ribosomal protein uL6 family. In terms of assembly, part of the 50S ribosomal subunit.

Functionally, this protein binds to the 23S rRNA, and is important in its secondary structure. It is located near the subunit interface in the base of the L7/L12 stalk, and near the tRNA binding site of the peptidyltransferase center. This Pelotomaculum thermopropionicum (strain DSM 13744 / JCM 10971 / SI) protein is Large ribosomal subunit protein uL6.